The following is a 459-amino-acid chain: MPSKTDFTSSTMTPREIVQELDRHIVGQQAAKRSVAIALRNRWRRMQLPEELRNEVMPKNILMIGPTGVGKTEIARRLATLANAPFVKVEATRFTEVGYVGKDVEQIGRDLVDTAVKMYREQAKVRVRTQAEEYAEERILDVLLPRRSVGIGFDVDADVIRQEPSAHESETRAKFRRMLRSGELEEREIELDVAVNVSMDIMTPPGMEEMGQQLRQMFSNIGGGKSQKRKLTIKAARPLLIEEEAAKLVNEDEIRAAAIEACEQNGIVFIDEIDKVVKRGDTVGGGDVSREGVQRDLLPLVEGSNVSTKYGTIRTNHILFIASGAFHLTKPSDLIPELQGRFPIRVELDALSKADFIRILTEPKAALTKQYQELLKTEGVSLDFTEDAIDRIAEIAYLVNERQENIGARRLHTVLERLLEMLSYESPDRDGESVTVDADYVNAHLGELVKDPDLSRYIL.

ATP is bound by residues Val-26, 68–73 (GVGKTE), Asp-271, Glu-337, and Arg-409.

The protein belongs to the ClpX chaperone family. HslU subfamily. As to quaternary structure, a double ring-shaped homohexamer of HslV is capped on each side by a ring-shaped HslU homohexamer. The assembly of the HslU/HslV complex is dependent on binding of ATP.

The protein localises to the cytoplasm. In terms of biological role, ATPase subunit of a proteasome-like degradation complex; this subunit has chaperone activity. The binding of ATP and its subsequent hydrolysis by HslU are essential for unfolding of protein substrates subsequently hydrolyzed by HslV. HslU recognizes the N-terminal part of its protein substrates and unfolds these before they are guided to HslV for hydrolysis. The chain is ATP-dependent protease ATPase subunit HslU from Xylella fastidiosa (strain 9a5c).